The following is a 273-amino-acid chain: XIAP-associated factor 1 (273 aa).

Residues 22–80 (LHEAHCLRFIVLCPECEEPIPESKMKEHMEVVHQQTKESQQHPAKCKFCELAVQLSNLD) form a TRAF-type zinc finger. A disordered region spans residues 181 to 228 (GNRRSTVSKDVRPKTKNRNSSTKRETKKQNGTVALPLKSGLQQRADLP).

As to quaternary structure, interacts with BIRC1, BIRC2, BIRC3, BIRC4, BIRC7 and BIRC8. Part of an complex consisting of BIRC4, XAF1 and BIRC5; the complex formation requires IFN-beta stimulation. Interacts with RNF114, the interaction increases XAF1 stability and proapoptotic effects, and may regulate IFN signaling.

The protein resides in the cytoplasm. Its subcellular location is the nucleus. It is found in the mitochondrion. Its function is as follows. Seems to function as a negative regulator of members of the IAP (inhibitor of apoptosis protein) family. Inhibits anti-caspase activity of BIRC4. Induces cleavage and inactivation of BIRC4 independent of caspase activation. Mediates TNF-alpha-induced apoptosis and is involved in apoptosis in trophoblast cells. May inhibit BIRC4 indirectly by activating the mitochondrial apoptosis pathway. After translocation to mitochondria, promotes translocation of BAX to mitochondria and cytochrome c release from mitochondria. Seems to promote the redistribution of BIRC4 from the cytoplasm to the nucleus, probably independent of BIRC4 inactivation which seems to occur in the cytoplasm. The BIRC4-XAF1 complex mediates down-regulation of BIRC5/survivin; the process requires the E3 ligase activity of BIRC4. Seems to be involved in cellular sensitivity to the proapoptotic actions of TRAIL. May be a tumor suppressor by mediating apoptosis resistance of cancer cells. The sequence is that of XIAP-associated factor 1 (Xaf1) from Mus musculus (Mouse).